Reading from the N-terminus, the 161-residue chain is S-ribosylhomocysteine lyase (161 aa).

H58, H62, and C128 together coordinate Fe cation.

It belongs to the LuxS family. As to quaternary structure, homodimer. Fe cation is required as a cofactor.

The catalysed reaction is S-(5-deoxy-D-ribos-5-yl)-L-homocysteine = (S)-4,5-dihydroxypentane-2,3-dione + L-homocysteine. Functionally, involved in the synthesis of autoinducer 2 (AI-2) which is secreted by bacteria and is used to communicate both the cell density and the metabolic potential of the environment. The regulation of gene expression in response to changes in cell density is called quorum sensing. Catalyzes the transformation of S-ribosylhomocysteine (RHC) to homocysteine (HC) and 4,5-dihydroxy-2,3-pentadione (DPD). The chain is S-ribosylhomocysteine lyase from Bifidobacterium adolescentis (strain ATCC 15703 / DSM 20083 / NCTC 11814 / E194a).